A 273-amino-acid polypeptide reads, in one-letter code: MAIVKCKPTSPGRRHVVKVVNLELHKGKPFAPLVEKNSKSGGRNNNGRITTRHIGGGHKQAYRIVDFKRNKDGIPATVERLEYDPNRSANIALVLYKDGERRYILAPKGLKAGDQIQSGVDAAIKAGNTLPMRNIPVGSTVHNVEMKPGKGGQIARSAGTYVQIVAREGSYVTLRLRSGEMRKVESDCRATLGEVGNAEHMLRVLGKAGAARWRGVRPTVRGTAMNPVDHPHGGGEGRNFGKHPVSPWGLQTKGKKTRSNKRTDKFIVRRRSK.

Disordered regions lie at residues 32-53 (PLVE…TTRH) and 221-273 (RGTA…RRSK). Residues 39–48 (KSGGRNNNGR) are compositionally biased toward low complexity.

The protein belongs to the universal ribosomal protein uL2 family. As to quaternary structure, part of the 50S ribosomal subunit. Forms a bridge to the 30S subunit in the 70S ribosome.

Functionally, one of the primary rRNA binding proteins. Required for association of the 30S and 50S subunits to form the 70S ribosome, for tRNA binding and peptide bond formation. It has been suggested to have peptidyltransferase activity; this is somewhat controversial. Makes several contacts with the 16S rRNA in the 70S ribosome. This Erwinia tasmaniensis (strain DSM 17950 / CFBP 7177 / CIP 109463 / NCPPB 4357 / Et1/99) protein is Large ribosomal subunit protein uL2.